A 341-amino-acid polypeptide reads, in one-letter code: uncharacterized protein (341 aa).

This is an uncharacterized protein from Methanocaldococcus jannaschii (strain ATCC 43067 / DSM 2661 / JAL-1 / JCM 10045 / NBRC 100440) (Methanococcus jannaschii).